The following is a 228-amino-acid chain: Cytidylate kinase (228 aa).

17–25 (GPTASGKGT) serves as a coordination point for ATP.

The protein belongs to the cytidylate kinase family. Type 1 subfamily.

It is found in the cytoplasm. The catalysed reaction is CMP + ATP = CDP + ADP. The enzyme catalyses dCMP + ATP = dCDP + ADP. The chain is Cytidylate kinase from Burkholderia pseudomallei (strain 1106a).